The sequence spans 628 residues: Probable potassium transport system protein Kup (628 aa).

11 consecutive transmembrane segments (helical) span residues 56–76 (ILSL…VLLI), 109–129 (LILG…TPAI), 141–161 (AAPG…TLLF), 174–194 (FFGP…VVHI), 209–229 (ALAF…AVVL), 253–273 (WFSL…AMLL), 295–315 (LIVL…TAAF), 343–363 (IYVP…VVTF), 372–392 (AYGI…FFVI), 400–420 (WALC…FFAA), and 425–445 (ILDG…LMMT).

Belongs to the HAK/KUP transporter (TC 2.A.72) family.

It localises to the cell inner membrane. It catalyses the reaction K(+)(in) + H(+)(in) = K(+)(out) + H(+)(out). Transport of potassium into the cell. Likely operates as a K(+):H(+) symporter. In Methylibium petroleiphilum (strain ATCC BAA-1232 / LMG 22953 / PM1), this protein is Probable potassium transport system protein Kup.